The sequence spans 274 residues: Large ribosomal subunit protein uL2 (274 aa).

The disordered stretch occupies residues 224–274 (VAMNPVDHPHGGGEGRTSGGRHPVTPWGIPTKGYKTRRNKRSNKLIVQKRK). Positions 257-274 (YKTRRNKRSNKLIVQKRK) are enriched in basic residues.

Belongs to the universal ribosomal protein uL2 family. Part of the 50S ribosomal subunit. Forms a bridge to the 30S subunit in the 70S ribosome.

Functionally, one of the primary rRNA binding proteins. Required for association of the 30S and 50S subunits to form the 70S ribosome, for tRNA binding and peptide bond formation. It has been suggested to have peptidyltransferase activity; this is somewhat controversial. Makes several contacts with the 16S rRNA in the 70S ribosome. The chain is Large ribosomal subunit protein uL2 from Francisella tularensis subsp. holarctica (strain FTNF002-00 / FTA).